Consider the following 213-residue polypeptide: uncharacterized protein (213 aa).

S-adenosyl-L-methionine is bound by residues Gly53, Glu74, and Asp97.

Belongs to the methyltransferase superfamily. YrrT family.

Could be a S-adenosyl-L-methionine-dependent methyltransferase. This is an uncharacterized protein from Bacillus subtilis (strain 168).